Here is a 171-residue protein sequence, read N- to C-terminus: 3-hydroxydecanoyl-[acyl-carrier-protein] dehydratase (171 aa).

H70 is an active-site residue.

The protein belongs to the thioester dehydratase family. FabA subfamily. As to quaternary structure, homodimer.

The protein localises to the cytoplasm. The enzyme catalyses a (3R)-hydroxyacyl-[ACP] = a (2E)-enoyl-[ACP] + H2O. The catalysed reaction is (3R)-hydroxydecanoyl-[ACP] = (2E)-decenoyl-[ACP] + H2O. It carries out the reaction (2E)-decenoyl-[ACP] = (3Z)-decenoyl-[ACP]. It functions in the pathway lipid metabolism; fatty acid biosynthesis. In terms of biological role, necessary for the introduction of cis unsaturation into fatty acids. Catalyzes the dehydration of (3R)-3-hydroxydecanoyl-ACP to E-(2)-decenoyl-ACP and then its isomerization to Z-(3)-decenoyl-ACP. Can catalyze the dehydratase reaction for beta-hydroxyacyl-ACPs with saturated chain lengths up to 16:0, being most active on intermediate chain length. In Pseudomonas fluorescens (strain Pf0-1), this protein is 3-hydroxydecanoyl-[acyl-carrier-protein] dehydratase.